Here is a 226-residue protein sequence, read N- to C-terminus: NAD(P)H-hydrate epimerase (226 aa).

The 206-residue stretch at 10-215 (AIELDLDLFE…ALQRKYQLNL (206 aa)) folds into the YjeF N-terminal domain. 58–62 (NNGGD) serves as a coordination point for (6S)-NADPHX. Asn59 and Asp123 together coordinate K(+). (6S)-NADPHX-binding positions include 127 to 133 (GFGFKPP) and Asp156. Position 159 (Ser159) interacts with K(+).

Belongs to the NnrE/AIBP family. It depends on K(+) as a cofactor.

It catalyses the reaction (6R)-NADHX = (6S)-NADHX. It carries out the reaction (6R)-NADPHX = (6S)-NADPHX. Its function is as follows. Catalyzes the epimerization of the S- and R-forms of NAD(P)HX, a damaged form of NAD(P)H that is a result of enzymatic or heat-dependent hydration. This is a prerequisite for the S-specific NAD(P)H-hydrate dehydratase to allow the repair of both epimers of NAD(P)HX. In Drosophila persimilis (Fruit fly), this protein is NAD(P)H-hydrate epimerase.